Reading from the N-terminus, the 426-residue chain is 3-phosphoshikimate 1-carboxyvinyltransferase (426 aa).

K22, S23, and R27 together coordinate 3-phosphoshikimate. Residue K22 participates in phosphoenolpyruvate binding. Residues G96 and R124 each coordinate phosphoenolpyruvate. 3-phosphoshikimate is bound by residues S170, S171, Q172, S198, D314, N337, and K341. Phosphoenolpyruvate is bound at residue Q172. D314 serves as the catalytic Proton acceptor. R345, R387, and K412 together coordinate phosphoenolpyruvate.

It belongs to the EPSP synthase family. In terms of assembly, monomer.

It is found in the cytoplasm. The enzyme catalyses 3-phosphoshikimate + phosphoenolpyruvate = 5-O-(1-carboxyvinyl)-3-phosphoshikimate + phosphate. It participates in metabolic intermediate biosynthesis; chorismate biosynthesis; chorismate from D-erythrose 4-phosphate and phosphoenolpyruvate: step 6/7. In terms of biological role, catalyzes the transfer of the enolpyruvyl moiety of phosphoenolpyruvate (PEP) to the 5-hydroxyl of shikimate-3-phosphate (S3P) to produce enolpyruvyl shikimate-3-phosphate and inorganic phosphate. This is 3-phosphoshikimate 1-carboxyvinyltransferase from Shewanella sp. (strain MR-7).